A 1519-amino-acid polypeptide reads, in one-letter code: Dicer-like protein 1 (1519 aa).

The span at 1 to 13 shows a compositional bias: polar residues; sequence MTHQNTETASLAT. The segment at 1–62 is disordered; it reads MTHQNTETAS…KDPSQRQRQQ (62 aa). Residues 39-48 are compositionally biased toward acidic residues; the sequence is SDESEGSEEE. The 182-residue stretch at 116–297 folds into the Helicase ATP-binding domain; sequence LFERAKVQNT…EAARNLEALL (182 aa). 129–136 is a binding site for ATP; sequence LDTGSGKT. The short motif at 242 to 245 is the DEAH box element; sequence DEAH. The 171-residue stretch at 431–601 folds into the Helicase C-terminal domain; the sequence is ALSSKVRVLW…QLLPEDRILH (171 aa). The 91-residue stretch at 634-724 folds into the Dicer dsRNA-binding fold domain; that stretch reads AITVLARYAS…NSVYHRRLPA (91 aa). Positions 882–1001 constitute a PAZ domain; the sequence is DDIEYQADMP…ICIEPLKISA (120 aa). RNase III domains follow at residues 1026–1184 and 1235–1387; these read GLEA…LTPG and CRRV…VDSN. 3 residues coordinate Mg(2+): glutamate 1275, aspartate 1373, and glutamate 1376. A DRBM domain is found at 1421–1489; the sequence is TFLHNKLTNE…SENALTELLH (69 aa). The Zn(2+) site is built by cysteine 1433, histidine 1460, cysteine 1501, and cysteine 1503.

It belongs to the helicase family. Dicer subfamily. Requires Mg(2+) as cofactor. Mn(2+) serves as cofactor.

Dicer-like endonuclease involved in cleaving double-stranded RNA in the RNA interference (RNAi) pathway. Produces 21 to 25 bp dsRNAs (siRNAs) which target the selective destruction of homologous RNAs leading to sequence-specific suppression of gene expression, called post-transcriptional gene silencing (PTGS). Part of a broad host defense response against viral infection and transposons. The chain is Dicer-like protein 1 (dcl1) from Aspergillus terreus (strain NIH 2624 / FGSC A1156).